A 128-amino-acid polypeptide reads, in one-letter code: Probable 4-amino-4-deoxy-L-arabinose-phosphoundecaprenol flippase subunit ArnF (128 aa).

Residues 1–2 (MG) are Cytoplasmic-facing. The helical transmembrane segment at 3–23 (LMWGLFSVIIASVAQLSLGFA) threads the bilayer. Over 24 to 35 (ASHLPPMTHLWD) the chain is Periplasmic. The chain crosses the membrane as a helical span at residues 36–56 (FIATLLAFGLDARILLLGLLG). At 57-77 (YLLSVFCWYKTLHKLALSKAY) the chain is on the cytoplasmic side. The chain crosses the membrane as a helical span at residues 78-98 (ALLSMSYVLVWIASMVLPGWG). Over 99–100 (GT) the chain is Periplasmic. Residues 101–121 (FSLKALLGVACIMSGLMLIFL) traverse the membrane as a helical segment. The Cytoplasmic portion of the chain corresponds to 122–128 (PTTKQRY).

The protein belongs to the ArnF family. In terms of assembly, heterodimer of ArnE and ArnF.

The protein resides in the cell inner membrane. The protein operates within bacterial outer membrane biogenesis; lipopolysaccharide biosynthesis. Its function is as follows. Translocates 4-amino-4-deoxy-L-arabinose-phosphoundecaprenol (alpha-L-Ara4N-phosphoundecaprenol) from the cytoplasmic to the periplasmic side of the inner membrane. In Shigella dysenteriae serotype 1 (strain Sd197), this protein is Probable 4-amino-4-deoxy-L-arabinose-phosphoundecaprenol flippase subunit ArnF.